The sequence spans 224 residues: Pyridoxine/pyridoxamine 5'-phosphate oxidase (224 aa).

Substrate is bound by residues 19–22 (RGEY) and Lys-81. Residues 76-81 (RSVLCK), 91-92 (FT), Lys-98, and Gln-120 each bind FMN. Tyr-138 and Arg-142 together coordinate substrate. Residues 155–156 (QS) and Trp-201 each bind FMN. Residue 207–209 (RMH) participates in substrate binding. Arg-211 provides a ligand contact to FMN.

This sequence belongs to the pyridoxamine 5'-phosphate oxidase family. As to quaternary structure, homodimer. Requires FMN as cofactor.

The catalysed reaction is pyridoxamine 5'-phosphate + O2 + H2O = pyridoxal 5'-phosphate + H2O2 + NH4(+). It catalyses the reaction pyridoxine 5'-phosphate + O2 = pyridoxal 5'-phosphate + H2O2. It participates in cofactor metabolism; pyridoxal 5'-phosphate salvage; pyridoxal 5'-phosphate from pyridoxamine 5'-phosphate: step 1/1. Its pathway is cofactor metabolism; pyridoxal 5'-phosphate salvage; pyridoxal 5'-phosphate from pyridoxine 5'-phosphate: step 1/1. Catalyzes the oxidation of either pyridoxine 5'-phosphate (PNP) or pyridoxamine 5'-phosphate (PMP) into pyridoxal 5'-phosphate (PLP). In Mycobacterium bovis (strain ATCC BAA-935 / AF2122/97), this protein is Pyridoxine/pyridoxamine 5'-phosphate oxidase.